We begin with the raw amino-acid sequence, 540 residues long: Sensory neuron membrane protein 1 (540 aa).

Residues 1-105 (MRTDDPVIGN…WIFRPDLSKP (105 aa)) are Cytoplasmic-facing. Residues 106–126 (LTGDEMITIPHPLILGALLMV) traverse the membrane as a helical segment. Residues 127 to 436 (QRDREAMMPL…YTLFLGLRFN (310 aa)) are Extracellular-facing. 2 N-linked (GlcNAc...) asparagine glycosylation sites follow: N193 and N206. 3 disulfide bridges follow: C245–C310, C274–C330, and C312–C319. N418 carries an N-linked (GlcNAc...) asparagine glycan. The chain crosses the membrane as a helical span at residues 437–457 (TAVKWLTIIIGTIGTIVGGFM). Residues 458–540 (HYKRTTKMVN…VTVTEMQERY (83 aa)) are Cytoplasmic-facing.

The protein belongs to the CD36 family.

It localises to the cell membrane. In terms of biological role, plays an olfactory role that is not restricted to pheromone sensitivity. The sequence is that of Sensory neuron membrane protein 1 from Aedes aegypti (Yellowfever mosquito).